Reading from the N-terminus, the 127-residue chain is Large ribosomal subunit protein bL17 (127 aa).

This sequence belongs to the bacterial ribosomal protein bL17 family. As to quaternary structure, part of the 50S ribosomal subunit. Contacts protein L32.

The sequence is that of Large ribosomal subunit protein bL17 from Limosilactobacillus reuteri (strain DSM 20016) (Lactobacillus reuteri).